Consider the following 99-residue polypeptide: NADH-quinone oxidoreductase subunit K (99 aa).

The next 3 membrane-spanning stretches (helical) occupy residues 3–23 (PANY…GVLL), 28–48 (IVMF…FVTF), and 59–79 (MIAF…LAII).

This sequence belongs to the complex I subunit 4L family. As to quaternary structure, NDH-1 is composed of 14 different subunits. Subunits NuoA, H, J, K, L, M, N constitute the membrane sector of the complex.

Its subcellular location is the cell membrane. The enzyme catalyses a quinone + NADH + 5 H(+)(in) = a quinol + NAD(+) + 4 H(+)(out). Functionally, NDH-1 shuttles electrons from NADH, via FMN and iron-sulfur (Fe-S) centers, to quinones in the respiratory chain. The immediate electron acceptor for the enzyme in this species is believed to be a menaquinone. Couples the redox reaction to proton translocation (for every two electrons transferred, four hydrogen ions are translocated across the cytoplasmic membrane), and thus conserves the redox energy in a proton gradient. The protein is NADH-quinone oxidoreductase subunit K of Mycobacterium marinum (strain ATCC BAA-535 / M).